A 37-amino-acid chain; its full sequence is Esculentin-2B (37 aa).

Cysteines 31 and 37 form a disulfide.

The protein belongs to the frog skin active peptide (FSAP) family. Esculentin subfamily. Expressed by the skin glands.

It is found in the secreted. Functionally, shows antibacterial activity against representative Gram-negative and Gram-positive bacterial species, and hemolytic activity. The polypeptide is Esculentin-2B (Pelophylax lessonae (Pool frog)).